Reading from the N-terminus, the 179-residue chain is Large ribosomal subunit protein bL9 (179 aa).

Residues 155 to 179 (KPEEAPVPVAEEPTAETEQAEVAAE) form a disordered region. Residues 167 to 179 (PTAETEQAEVAAE) are compositionally biased toward acidic residues.

Belongs to the bacterial ribosomal protein bL9 family.

Its function is as follows. Binds to the 23S rRNA. The sequence is that of Large ribosomal subunit protein bL9 from Porphyromonas gingivalis (strain ATCC BAA-308 / W83).